A 469-amino-acid polypeptide reads, in one-letter code: Alpha,alpha-trehalose-phosphate synthase [UDP-forming] (469 aa).

D-glucose 6-phosphate-binding residues include Y87 and D141. 2 residues coordinate UDP: R279 and K284. UDP-alpha-D-glucose contacts are provided by R279 and K284. R317 contacts D-glucose 6-phosphate. 378–386 (DGMNLVSYE) contributes to the UDP-alpha-D-glucose binding site. 382 to 386 (LVSYE) serves as a coordination point for UDP.

This sequence belongs to the glycosyltransferase 20 family.

It carries out the reaction D-glucose 6-phosphate + UDP-alpha-D-glucose = alpha,alpha-trehalose 6-phosphate + UDP + H(+). It participates in carbohydrate biosynthesis. Functionally, synthase catalytic subunit of the trehalose synthase complex that catalyzes the production of trehalose from glucose-6-phosphate and UDP-alpha-D-glucose in a two step process. The disaccharide trehalose serves as a storage carbohydrate that is mobilized during spore germination. This is Alpha,alpha-trehalose-phosphate synthase [UDP-forming] from Yarrowia lipolytica (strain CLIB 122 / E 150) (Yeast).